The sequence spans 278 residues: Large ribosomal subunit protein uL2 (278 aa).

Disordered stretches follow at residues 33–53 and 221–278; these read LTEGKRKTGGRNNKGHVTSRG and RGVA…KKKR. Over residues 269–278 the composition is skewed to basic residues; sequence IRSRHAKKKR.

Belongs to the universal ribosomal protein uL2 family. Part of the 50S ribosomal subunit. Forms a bridge to the 30S subunit in the 70S ribosome.

Its function is as follows. One of the primary rRNA binding proteins. Required for association of the 30S and 50S subunits to form the 70S ribosome, for tRNA binding and peptide bond formation. It has been suggested to have peptidyltransferase activity; this is somewhat controversial. Makes several contacts with the 16S rRNA in the 70S ribosome. The chain is Large ribosomal subunit protein uL2 from Novosphingobium aromaticivorans (strain ATCC 700278 / DSM 12444 / CCUG 56034 / CIP 105152 / NBRC 16084 / F199).